The primary structure comprises 364 residues: UDP-N-acetylglucosamine--N-acetylmuramyl-(pentapeptide) pyrophosphoryl-undecaprenol N-acetylglucosamine transferase 1 (364 aa).

Residues 10 to 12 (TGG), Asn-124, Ser-195, Ile-250, and Gln-295 each bind UDP-N-acetyl-alpha-D-glucosamine.

Belongs to the glycosyltransferase 28 family. MurG subfamily.

Its subcellular location is the cell membrane. The catalysed reaction is di-trans,octa-cis-undecaprenyl diphospho-N-acetyl-alpha-D-muramoyl-L-alanyl-D-glutamyl-meso-2,6-diaminopimeloyl-D-alanyl-D-alanine + UDP-N-acetyl-alpha-D-glucosamine = di-trans,octa-cis-undecaprenyl diphospho-[N-acetyl-alpha-D-glucosaminyl-(1-&gt;4)]-N-acetyl-alpha-D-muramoyl-L-alanyl-D-glutamyl-meso-2,6-diaminopimeloyl-D-alanyl-D-alanine + UDP + H(+). It functions in the pathway cell wall biogenesis; peptidoglycan biosynthesis. In terms of biological role, cell wall formation. Catalyzes the transfer of a GlcNAc subunit on undecaprenyl-pyrophosphoryl-MurNAc-pentapeptide (lipid intermediate I) to form undecaprenyl-pyrophosphoryl-MurNAc-(pentapeptide)GlcNAc (lipid intermediate II). This chain is UDP-N-acetylglucosamine--N-acetylmuramyl-(pentapeptide) pyrophosphoryl-undecaprenol N-acetylglucosamine transferase 1, found in Bacillus cereus (strain ATCC 10987 / NRS 248).